A 477-amino-acid polypeptide reads, in one-letter code: ATP synthase subunit beta (477 aa).

163-170 lines the ATP pocket; sequence GGAGVGKT.

Belongs to the ATPase alpha/beta chains family. In terms of assembly, F-type ATPases have 2 components, CF(1) - the catalytic core - and CF(0) - the membrane proton channel. CF(1) has five subunits: alpha(3), beta(3), gamma(1), delta(1), epsilon(1). CF(0) has four main subunits: a(1), b(1), b'(1) and c(9-12).

It localises to the cellular thylakoid membrane. It catalyses the reaction ATP + H2O + 4 H(+)(in) = ADP + phosphate + 5 H(+)(out). In terms of biological role, produces ATP from ADP in the presence of a proton gradient across the membrane. The catalytic sites are hosted primarily by the beta subunits. The polypeptide is ATP synthase subunit beta (Synechococcus sp. (strain JA-2-3B'a(2-13)) (Cyanobacteria bacterium Yellowstone B-Prime)).